A 137-amino-acid chain; its full sequence is ATP synthase epsilon chain (137 aa).

The protein belongs to the ATPase epsilon chain family. As to quaternary structure, F-type ATPases have 2 components, CF(1) - the catalytic core - and CF(0) - the membrane proton channel. CF(1) has five subunits: alpha(3), beta(3), gamma(1), delta(1), epsilon(1). CF(0) has three main subunits: a, b and c.

The protein resides in the cell membrane. Produces ATP from ADP in the presence of a proton gradient across the membrane. The protein is ATP synthase epsilon chain of Thermobifida fusca (strain YX).